The primary structure comprises 546 residues: Phosphomethylpyrimidine synthase (546 aa).

Substrate is bound by residues N145, M174, Y203, H239, 259-261 (SRG), 300-303 (DGLR), and E339. Zn(2+) is bound at residue H343. Position 366 (Y366) interacts with substrate. Residue H407 participates in Zn(2+) binding. Residues C487, C490, and C495 each contribute to the [4Fe-4S] cluster site.

The protein belongs to the ThiC family. Requires [4Fe-4S] cluster as cofactor.

The enzyme catalyses 5-amino-1-(5-phospho-beta-D-ribosyl)imidazole + S-adenosyl-L-methionine = 4-amino-2-methyl-5-(phosphooxymethyl)pyrimidine + CO + 5'-deoxyadenosine + formate + L-methionine + 3 H(+). The protein operates within cofactor biosynthesis; thiamine diphosphate biosynthesis. Catalyzes the synthesis of the hydroxymethylpyrimidine phosphate (HMP-P) moiety of thiamine from aminoimidazole ribotide (AIR) in a radical S-adenosyl-L-methionine (SAM)-dependent reaction. The polypeptide is Phosphomethylpyrimidine synthase (Mycobacterium ulcerans (strain Agy99)).